Reading from the N-terminus, the 133-residue chain is Minor capsid protein VP2 (133 aa).

This sequence belongs to the vesivirus VP2 protein family. Homooligomer. The portal-like structure consists in 12 copies of VP2. Interacts with capsid protein VP1.

The protein resides in the virion. The protein localises to the host cytoplasm. Functionally, minor structural protein that forms a portal-like structure at a unique three-fold axis of symmetry, following binding to the host receptor. The channel formed by VP2 may allow the delivery of the viral genome through the host endosomal membrane. The chain is Minor capsid protein VP2 from Canis lupus familiaris (Dog).